Consider the following 601-residue polypeptide: Mitochondrial tRNA methylthiotransferase CDK5RAP1 (601 aa).

The transit peptide at 1–33 (MHPLQCVLQVQRSLGWGPLASVSWLSLRMCRAH) directs the protein to the mitochondrion. Residues 100–220 (RKVYLETYGC…LPRLLAVAES (121 aa)) enclose the MTTase N-terminal domain. [4Fe-4S] cluster-binding residues include C109, C145, C183, C258, C262, and C265. Positions 244–512 (SASATSAFVS…ITIFREEATK (269 aa)) constitute a Radical SAM core domain. The region spanning 515 to 590 (QTSVGCTQLV…SQTLRGHVLC (76 aa)) is the TRAM domain.

The protein belongs to the methylthiotransferase family. MiaB subfamily. In terms of assembly, interacts with CDK5R1 (p35 form). CDK5RAP1, CDK5RAP2 and CDK5RAP3 show competitive binding to CDK5R1. Forms a complex with CDK5R1 and CDK5. Requires [4Fe-4S] cluster as cofactor. In terms of tissue distribution, expressed in heart, brain, placenta, lung, liver, skeletal muscle, kidney and pancreas. Expressed in neurons of central nervous tissue. As to expression, mainly expressed in brain, placenta and testis. High expression in placenta and lung.

It is found in the mitochondrion. The catalysed reaction is N(6)-dimethylallyladenosine(37) in tRNA + (sulfur carrier)-SH + AH2 + 2 S-adenosyl-L-methionine = 2-methylsulfanyl-N(6)-dimethylallyladenosine(37) in tRNA + (sulfur carrier)-H + 5'-deoxyadenosine + L-methionine + A + S-adenosyl-L-homocysteine + 2 H(+). Functionally, methylthiotransferase that catalyzes the conversion of N6-(dimethylallyl)adenosine (i(6)A) to 2-methylthio-N6-(dimethylallyl)adenosine (ms(2)i(6)A) at position 37 (adjacent to the 3'-end of the anticodon) of four mitochondrial DNA-encoded tRNAs (Ser(UCN), Phe, Tyr and Trp). Essential for efficient and highly accurate protein translation by the ribosome. Specifically inhibits CDK5 activation by CDK5R1. Essential for efficient mitochondrial protein synthesis and respiratory chain; shows pathological consequences in mitochondrial disease. In Homo sapiens (Human), this protein is Mitochondrial tRNA methylthiotransferase CDK5RAP1.